The primary structure comprises 412 residues: Serine hydroxymethyltransferase (412 aa).

(6S)-5,6,7,8-tetrahydrofolate-binding positions include Leu-117 and 121–123 (GHL). Lys-226 bears the N6-(pyridoxal phosphate)lysine mark. A (6S)-5,6,7,8-tetrahydrofolate-binding site is contributed by 349–351 (SPF).

The protein belongs to the SHMT family. As to quaternary structure, homodimer. Requires pyridoxal 5'-phosphate as cofactor.

The protein localises to the cytoplasm. It carries out the reaction (6R)-5,10-methylene-5,6,7,8-tetrahydrofolate + glycine + H2O = (6S)-5,6,7,8-tetrahydrofolate + L-serine. It participates in one-carbon metabolism; tetrahydrofolate interconversion. Its pathway is amino-acid biosynthesis; glycine biosynthesis; glycine from L-serine: step 1/1. In terms of biological role, catalyzes the reversible interconversion of serine and glycine with tetrahydrofolate (THF) serving as the one-carbon carrier. This reaction serves as the major source of one-carbon groups required for the biosynthesis of purines, thymidylate, methionine, and other important biomolecules. Also exhibits THF-independent aldolase activity toward beta-hydroxyamino acids, producing glycine and aldehydes, via a retro-aldol mechanism. In Lawsonia intracellularis (strain PHE/MN1-00), this protein is Serine hydroxymethyltransferase.